Reading from the N-terminus, the 354-residue chain is S-adenosylmethionine:tRNA ribosyltransferase-isomerase (354 aa).

Belongs to the QueA family. In terms of assembly, monomer.

The protein localises to the cytoplasm. It carries out the reaction 7-aminomethyl-7-carbaguanosine(34) in tRNA + S-adenosyl-L-methionine = epoxyqueuosine(34) in tRNA + adenine + L-methionine + 2 H(+). Its pathway is tRNA modification; tRNA-queuosine biosynthesis. Functionally, transfers and isomerizes the ribose moiety from AdoMet to the 7-aminomethyl group of 7-deazaguanine (preQ1-tRNA) to give epoxyqueuosine (oQ-tRNA). The polypeptide is S-adenosylmethionine:tRNA ribosyltransferase-isomerase (Salmonella schwarzengrund (strain CVM19633)).